The following is a 185-amino-acid chain: Ribosome-recycling factor (185 aa).

Belongs to the RRF family.

It localises to the cytoplasm. Responsible for the release of ribosomes from messenger RNA at the termination of protein biosynthesis. May increase the efficiency of translation by recycling ribosomes from one round of translation to another. This is Ribosome-recycling factor from Glaesserella parasuis serovar 5 (strain SH0165) (Haemophilus parasuis).